A 342-amino-acid polypeptide reads, in one-letter code: Aldo-keto reductase pigE (342 aa).

Residues 1–27 (MGSISPKTRFPIVLGAGLIGSPGLFEG) form the signal peptide. An NADP(+)-binding site is contributed by Asp-52. The active-site Proton donor is Tyr-57. NADP(+) contacts are provided by Gln-182 and Arg-236. The N-linked (GlcNAc...) asparagine glycan is linked to Asn-271.

The protein belongs to the aldo/keto reductase family. Aldo/keto reductase 2 subfamily.

It participates in secondary metabolite biosynthesis. Functionally, aldo-keto reductase; part of the gene cluster that mediates the biosynthesis of azaphilone pigments (MonAzPs), a complex mixture of compounds with a common azaphilone skeleton very widely used as food colorants. Within the pathway, pigE is involved in the dehydration of the C-11 alcohol followed by the reduction of the C6(7) double bond which increases the electrophilicity of the C-5 ketone of the resulting acyl benzopyran and allows the intramolecular Knoevenagel aldol condensation with the C-20 enol of the side chain to yield the characteristic linear tricyclic carbon skeletons of the yellow pigments. The first step of the pathway is performed by the nrPKS pigA that forms the hexaketide precursor from successive condensations of five malonyl-CoA units, with a simple acetyl-CoA starter unit. The role of esterase pigG is not clear, but it may play at most a supplementary role in the formation of the benzaldehyde produced by the pigA nrPKS. This very reactive benzaldehyde is intercepted by the pigC ketoreductase that to provide the first stable enzyme-free MonAzPs intermediate, 6-(4-hydroxy-2-oxopentyl)-3-methyl-2,4-dioxocyclohexane carbaldehyde, also known as M7PKS-1. The FAD-dependent monooxygenase pigN hydroxylates M7PKS-1 at C-4, which triggers the formation of the pyran ring. PigJ, pigK and pigD are involved in the acetylation of the pyran ring. PigJ and pigK form the two subunits of a dedicated fungal FAS that produces the side chain fatty acyl moiety of MonAzPs and pigD transfers the fatty acyl chain to the C-4 alcohol. PigM and pigO are involved in the elimination of the omega-1 alcohol. PigM acts as an O-acetyltransferase that synthesizes the putative O-11 acetyl intermediate whereas pigO eliminates acetic acid to yield an intermediate with a C10(11) double bond. The dehydration of the C-11 alcohol followed by the reduction of the C6(7) double bond by the NAD(P)H-dependent oxidoreductase pigE increases the electrophilicity of the C-5 ketone of the resulting acyl benzopyran. This in turn sets up the C-5 ketone for an intramolecular Knoevenagel aldol condensation with the C-20 enol of the side chain. This condensation affords the characteristic linear tricyclic carbon skeletons of the yellow pigments that serve as the common precursors for the classical yellow pigments monascin and ankaflavin, orange pigments rubopunctatin and monascorubrin, and red pigments ribropunctamine and monascorubramine. The FAD-dependent oxidoreductase pigF is especially invoved in the biosynthesis of orange and red pigments via desaturation of C6(7). This Monascus ruber (Mold) protein is Aldo-keto reductase pigE.